The following is a 104-amino-acid chain: N(4)-acetylcytidine amidohydrolase (104 aa).

Residues 6 to 102 (TFYTRFQQDI…ELYVIAFKKV (97 aa)) enclose the ASCH domain. The active-site Proton acceptor is the lysine 20. Threonine 23 functions as the Nucleophile in the catalytic mechanism. Glutamate 73 serves as the catalytic Proton donor.

Belongs to the N(4)-acetylcytidine amidohydrolase family.

It catalyses the reaction N(4)-acetylcytidine + H2O = cytidine + acetate + H(+). The catalysed reaction is N(4)-acetyl-2'-deoxycytidine + H2O = 2'-deoxycytidine + acetate + H(+). The enzyme catalyses N(4)-acetylcytosine + H2O = cytosine + acetate + H(+). Its function is as follows. Catalyzes the hydrolysis of N(4)-acetylcytidine (ac4C). This Cronobacter sakazakii (strain ATCC BAA-894) (Enterobacter sakazakii) protein is N(4)-acetylcytidine amidohydrolase.